The primary structure comprises 456 residues: Solute carrier family 38 member 6 (456 aa).

An N-acetylmethionine modification is found at methionine 1. Phosphoserine occurs at positions 4 and 7. Transmembrane regions (helical) follow at residues 42-62, 85-105, 111-131, 170-190, and 191-211; these read SPGV…MGSG, VALL…QTAV, LGLF…IIIQ, LLII…KIGF, and LGYT…VVII. A disulfide bridge links cysteine 218 with cysteine 238. N-linked (GlcNAc...) asparagine glycosylation is present at asparagine 233. Residues 250 to 270 form a helical membrane-spanning segment; the sequence is AYALPTMAFSFLCHTSILPIY. Asparagine 283 is a glycosylation site (N-linked (GlcNAc...) asparagine). 5 helical membrane passes run 288–308, 327–347, 371–391, 394–414, and 431–451; these read AIAL…LTFY, VVVM…VPLI, FLIT…VPDI, VFGV…PGLF, and AFVL…LIIF.

Belongs to the amino acid/polyamine transporter 2 family.

It localises to the cell membrane. Its subcellular location is the synapse. It catalyses the reaction L-glutamine(out) = L-glutamine(in). The catalysed reaction is L-glutamate(out) = L-glutamate(in). In terms of biological role, amino acid transporter with an apparent selectivity for L-glutamine and L-glutamate. May facilitate glutamine uptake in excitatory neurons. The transport mechanism remains to be elucidated. This is Solute carrier family 38 member 6 from Homo sapiens (Human).